The primary structure comprises 229 residues: Ribonuclease 3 (229 aa).

In terms of domain architecture, RNase III spans 5–127 (LARLERQLGY…LIGAIYLDAG (123 aa)). E40 lines the Mg(2+) pocket. Residue D44 is part of the active site. The Mg(2+) site is built by D113 and E116. E116 is an active-site residue. Positions 154–224 (DPKTRLQEFL…AAAALIALGV (71 aa)) constitute a DRBM domain.

This sequence belongs to the ribonuclease III family. As to quaternary structure, homodimer. It depends on Mg(2+) as a cofactor.

Its subcellular location is the cytoplasm. It catalyses the reaction Endonucleolytic cleavage to 5'-phosphomonoester.. Functionally, digests double-stranded RNA. Involved in the processing of primary rRNA transcript to yield the immediate precursors to the large and small rRNAs (23S and 16S). Processes some mRNAs, and tRNAs when they are encoded in the rRNA operon. Processes pre-crRNA and tracrRNA of type II CRISPR loci if present in the organism. The sequence is that of Ribonuclease 3 from Pseudomonas fluorescens (strain SBW25).